We begin with the raw amino-acid sequence, 336 residues long: Tyrosine recombinase XerC (336 aa).

One can recognise a Core-binding (CB) domain in the interval 14 to 106 (VARCRWLEPF…SVKSFYRFLL (93 aa)). Residues 127–330 (KVPRFVSEEE…TFSRLKEIYD (204 aa)) form the Tyr recombinase domain. Residues Arg183, Lys207, His282, Arg285, and His308 contribute to the active site. Catalysis depends on Tyr317, which acts as the O-(3'-phospho-DNA)-tyrosine intermediate.

The protein belongs to the 'phage' integrase family. XerC subfamily. In terms of assembly, forms a cyclic heterotetrameric complex composed of two molecules of XerC and two molecules of XerD.

The protein localises to the cytoplasm. Its function is as follows. Site-specific tyrosine recombinase, which acts by catalyzing the cutting and rejoining of the recombining DNA molecules. The XerC-XerD complex is essential to convert dimers of the bacterial chromosome into monomers to permit their segregation at cell division. It also contributes to the segregational stability of plasmids. This is Tyrosine recombinase XerC from Chlorobaculum parvum (strain DSM 263 / NCIMB 8327) (Chlorobium vibrioforme subsp. thiosulfatophilum).